Reading from the N-terminus, the 529-residue chain is Nuclear protein localization protein 4 homolog 1 (529 aa).

Residues 129 to 266 (IQIENQELVN…ITEYSMDRHY (138 aa)) enclose the MPN domain. A RanBP2-type zinc finger spans residues 499-529 (SGGAVWNCGHCTFQNEAARQDCSMCGLPAAD).

Belongs to the NPL4 family. As to quaternary structure, forms a complex composed of ubxn-3, ufd-1, npl-4.1 and cdc-48.1; within the complex, interacts with ufd-1 and ubxn-3. Interacts with ufd-1. Interacts with elc-1/elongin C; the interaction may mediate the interaction between the npl-4-ufd-1-cdc-48 complex and the E3 ubiquitin ligase cul-2 complex.

The protein localises to the cytoplasm. Its subcellular location is the nucleus. In terms of biological role, in association with ufd-1 and ATPase cdc-48.1 and/or cdc-48.2, involved in the cytoplasmic elimination of misfolded proteins exported from the ER. This pathway, known as ERAD, prevents the activation of the unfolded protein response (UPR) caused by the accumulation of misfolded proteins in the ER. During S phase and in association with ufd-1, cdc-48.1 and/or cdc-48.2 and ubxn-3, ensures the degradation of DNA licensing factor cdt-1 after the initiation of DNA replication and thus the disassembly of the DNA replication CGM helicase complex by promoting the dissociation from chromatin of several of its components including cdc-45 and sld-5. Regulates ubxn-3 nuclear localization during S phase. This chain is Nuclear protein localization protein 4 homolog 1, found in Caenorhabditis elegans.